We begin with the raw amino-acid sequence, 236 residues long: F-box and leucine-rich protein 22 (236 aa).

The region spanning M1 to L46 is the F-box domain. 6 LRR repeats span residues F15–P40, W43–W72, H98–G123, C124–N149, C150–F175, and C176–S201.

In terms of assembly, directly interacts with SKP1 and CUL1. Enriched in cardiac muscle (at protein level).

It localises to the cytoplasm. It is found in the myofibril. Its subcellular location is the sarcomere. The protein resides in the z line. It functions in the pathway protein modification; protein ubiquitination. Functionally, substrate-recognition component of the SCF (SKP1-CUL1-F-box protein)-type E3 ubiquitin ligase complex. Promotes ubiquitination of sarcomeric proteins alpha-actinin-2 (ACTN2) and filamin-C (FLNC). The protein is F-box and leucine-rich protein 22 (Fbxl22) of Mus musculus (Mouse).